Here is a 98-residue protein sequence, read N- to C-terminus: DNA-binding protein Fis (98 aa).

A DNA-binding region (H-T-H motif) is located at residues 74 to 93 (QTRAATMLGINRGTLRKKLK).

The protein belongs to the transcriptional regulatory Fis family. As to quaternary structure, homodimer.

Functionally, activates ribosomal RNA transcription. Plays a direct role in upstream activation of rRNA promoters. This chain is DNA-binding protein Fis, found in Haemophilus ducreyi (strain 35000HP / ATCC 700724).